The chain runs to 402 residues: Arginine deiminase (402 aa).

The Amidino-cysteine intermediate role is filled by C392.

This sequence belongs to the arginine deiminase family.

Its subcellular location is the cytoplasm. It catalyses the reaction L-arginine + H2O = L-citrulline + NH4(+). The protein operates within amino-acid degradation; L-arginine degradation via ADI pathway; carbamoyl phosphate from L-arginine: step 1/2. This is Arginine deiminase from Mycolicibacterium gilvum (strain PYR-GCK) (Mycobacterium gilvum (strain PYR-GCK)).